We begin with the raw amino-acid sequence, 129 residues long: Small ribosomal subunit protein uS9 (129 aa).

Belongs to the universal ribosomal protein uS9 family.

In Chlorobium chlorochromatii (strain CaD3), this protein is Small ribosomal subunit protein uS9.